Reading from the N-terminus, the 927-residue chain is GPI inositol-deacylase (927 aa).

Residues 1-4 are Cytoplasmic-facing; the sequence is MNPL. Residues 5 to 25 form a helical membrane-spanning segment; it reads SAVFNSVVLVLLALGVTDVFF. At 26–595 the chain is on the lumenal side; it reads SYESSRCSMT…QIVRFHGIYL (570 aa). Residues N75 and N155 are each glycosylated (N-linked (GlcNAc...) asparagine). Residue S169 is part of the active site. N-linked (GlcNAc...) asparagine glycans are attached at residues N230, N362, N397, N432, N444, and N482. Residues 596–616 traverse the membrane as a helical segment; the sequence is PVYIVANLLLAYGAQLHSILI. The Cytoplasmic segment spans residues 617–672; that stretch reads QGSCMDLDLSFDVAAKPYKVDPVLIICKYLLNYKWFKNYWDGLMLPQLDAVQLHAY. A helical membrane pass occupies residues 673 to 693; the sequence is GFWFPLASLFFFIFGTSIAYW. Residues 694 to 733 lie on the Lumenal side of the membrane; the sequence is SSIGLQAAVRILSSLWIYLKRPSMFPKESKCITYRVYAET. Residues 734-754 form a helical membrane-spanning segment; the sequence is LFFAFISWRSCGTFSLLLVFL. Topologically, residues 755 to 821 are cytoplasmic; it reads RYLSKVLILY…KALDDCLKMH (67 aa). Residues 822 to 842 traverse the membrane as a helical segment; the sequence is FTILHLNLWIVLLGLPSFIYW. The Lumenal segment spans residues 843–858; it reads LKTLRYTIQLDPDPNR. A helical transmembrane segment spans residues 859-879; that stretch reads VSALVLIFILEILMNSTTSAI. The Cytoplasmic segment spans residues 880 to 887; that stretch reads KSSVCLKT. A helical membrane pass occupies residues 888-908; sequence AAVLQLPLSIIVVAFGTLHLY. Residues 909 to 927 lie on the Lumenal side of the membrane; it reads RISNLIAFSLFLHVVCCFV.

The protein belongs to the GPI inositol-deacylase family.

It is found in the endoplasmic reticulum membrane. GPI inositol-deacylase that catalyzes the remove of the acyl chain linked to the 2-OH position of inositol ring from the GPI-anchored protein (GPI-AP) in the endoplasmic reticulum. Initiates the post-attachment remodeling phase of GPI-AP biogenesis and participates in endoplasmic reticulum (ER)-to-Golgi transport of GPI-anchored protein. The chain is GPI inositol-deacylase from Xenopus laevis (African clawed frog).